The chain runs to 363 residues: Inositol-3-phosphate synthase (363 aa).

Lys-65 participates in a covalent cross-link: Isoglutamyl lysine isopeptide (Lys-Gln) (interchain with Q-Cter in protein Pup). NAD(+)-binding residues include Asp-70, Ala-129, Tyr-149, Ser-192, Asp-227, and Lys-240.

The protein belongs to the myo-inositol 1-phosphate synthase family. NAD(+) serves as cofactor. Post-translationally, pupylated at Lys-65 by the prokaryotic ubiquitin-like protein Pup, which leads to its degradation by the proteasome.

It catalyses the reaction D-glucose 6-phosphate = 1D-myo-inositol 3-phosphate. Functionally, key enzyme in myo-inositol biosynthesis pathway that catalyzes the conversion of glucose 6-phosphate to 1D-myo-inositol 3-phosphate in a NAD-dependent manner. The protein is Inositol-3-phosphate synthase (ino1) of Mycolicibacterium smegmatis (strain ATCC 700084 / mc(2)155) (Mycobacterium smegmatis).